The sequence spans 346 residues: Methylthioribose-1-phosphate isomerase (346 aa).

Substrate-binding positions include 46–48, Arg89, and Gln196; that span reads RGA. Asp237 serves as the catalytic Proton donor. 247–248 is a substrate binding site; the sequence is NK.

It belongs to the eIF-2B alpha/beta/delta subunits family. MtnA subfamily.

It catalyses the reaction 5-(methylsulfanyl)-alpha-D-ribose 1-phosphate = 5-(methylsulfanyl)-D-ribulose 1-phosphate. It participates in amino-acid biosynthesis; L-methionine biosynthesis via salvage pathway; L-methionine from S-methyl-5-thio-alpha-D-ribose 1-phosphate: step 1/6. In terms of biological role, catalyzes the interconversion of methylthioribose-1-phosphate (MTR-1-P) into methylthioribulose-1-phosphate (MTRu-1-P). This chain is Methylthioribose-1-phosphate isomerase, found in Geotalea uraniireducens (strain Rf4) (Geobacter uraniireducens).